Consider the following 160-residue polypeptide: Small ribosomal subunit protein uS19v (160 aa).

This sequence belongs to the universal ribosomal protein uS19 family.

It is found in the cytoplasm. The sequence is that of Small ribosomal subunit protein uS19v (RPS15F) from Arabidopsis thaliana (Mouse-ear cress).